A 986-amino-acid chain; its full sequence is Translation initiation factor IF-2 (986 aa).

The segment covering 75-94 has biased composition (basic and acidic residues); that stretch reads KRLSRLEEQSRKTYEKEQHL. Disordered regions lie at residues 75–105, 127–148, 185–258, and 277–394; these read KRLSRLEEQSRKTYEKEQHLSETLSPPAPPL, PPSKPLEIPVAETPASEEPDAP, SEVP…VSFD, and GRHK…HEED. 2 stretches are compositionally biased toward low complexity: residues 185 to 210 and 218 to 235; these read SEVPESQVLPESRVLPESQVLSESPL and SEPQEQQELPELPELPEI. The span at 292 to 313 shows a compositional bias: basic and acidic residues; sequence DALKDEFEPKPAEESRVEEKVV. Positions 315–338 are enriched in low complexity; it reads AKKPPVKAAADVKPKPVVADSSSS. A compositionally biased stretch (basic residues) spans 339 to 348; the sequence is AKKKGKKKKK. In terms of domain architecture, tr-type G spans 483-653; that stretch reads TRPPVVTIMG…LTEAEMRELR (171 aa). The segment at 492 to 499 is G1; it reads GHVDHGKT. Residue 492–499 participates in GTP binding; it reads GHVDHGKT. The interval 517-521 is G2; it reads GITQH. Residues 539 to 542 form a G3 region; sequence DTPG. GTP-binding positions include 539-543 and 593-596; these read DTPGH and NKID. The tract at residues 593–596 is G4; the sequence is NKID. The segment at 629-631 is G5; it reads SAK.

It belongs to the TRAFAC class translation factor GTPase superfamily. Classic translation factor GTPase family. IF-2 subfamily.

Its subcellular location is the cytoplasm. One of the essential components for the initiation of protein synthesis. Protects formylmethionyl-tRNA from spontaneous hydrolysis and promotes its binding to the 30S ribosomal subunits. Also involved in the hydrolysis of GTP during the formation of the 70S ribosomal complex. This Pelodictyon phaeoclathratiforme (strain DSM 5477 / BU-1) protein is Translation initiation factor IF-2.